Consider the following 432-residue polypeptide: Phosphomethylpyrimidine synthase (432 aa).

Substrate-binding positions include asparagine 66, methionine 95, tyrosine 124, histidine 163, 185 to 187, 226 to 229, and glutamate 265; these read SRG and DGLR. Histidine 269 provides a ligand contact to Zn(2+). Tyrosine 292 lines the substrate pocket. Histidine 333 is a Zn(2+) binding site. Positions 409, 412, and 416 each coordinate [4Fe-4S] cluster.

The protein belongs to the ThiC family. [4Fe-4S] cluster is required as a cofactor.

The catalysed reaction is 5-amino-1-(5-phospho-beta-D-ribosyl)imidazole + S-adenosyl-L-methionine = 4-amino-2-methyl-5-(phosphooxymethyl)pyrimidine + CO + 5'-deoxyadenosine + formate + L-methionine + 3 H(+). It functions in the pathway cofactor biosynthesis; thiamine diphosphate biosynthesis. Its function is as follows. Catalyzes the synthesis of the hydroxymethylpyrimidine phosphate (HMP-P) moiety of thiamine from aminoimidazole ribotide (AIR) in a radical S-adenosyl-L-methionine (SAM)-dependent reaction. The protein is Phosphomethylpyrimidine synthase of Desulfitobacterium hafniense (strain DSM 10664 / DCB-2).